Consider the following 84-residue polypeptide: U4-theraphotoxin-Hhn1b (84 aa).

The first 22 residues, 1–22 (MKVTLTAILTCAAVLVLHTTAA), serve as a signal peptide directing secretion. A propeptide spanning residues 23–47 (EELEESQLMEVGMPDTELAAVDEER) is cleaved from the precursor. Cystine bridges form between C51-C65, C55-C76, and C70-C81.

This sequence belongs to the neurotoxin 12 (Hwtx-2) family. 02 (Hwtx-2) subfamily. As to expression, expressed by the venom gland.

Its subcellular location is the secreted. Postsynaptic neurotoxin. The protein is U4-theraphotoxin-Hhn1b of Cyriopagopus hainanus (Chinese bird spider).